We begin with the raw amino-acid sequence, 499 residues long: Trichoplein keratin filament-binding protein (499 aa).

A coiled-coil region spans residues 12 to 38; it reads SRVRTLEQQLVRQREQEARLRRQWEQH. 2 disordered regions span residues 46–78 and 169–209; these read DVRS…EEKQ and VQQQ…EEEN. A compositionally biased stretch (polar residues) spans 50 to 67; it reads SKQAQWSSRQSFHRSMSA. Basic and acidic residues-rich tracts occupy residues 69 to 78 and 172 to 209; these read QRDRMREEKQ and QEKK…EEEN. Coiled-coil stretches lie at residues 71–133, 168–306, and 359–484; these read DRMR…ERRK, QVQQ…ALLE, and WEKR…MIRQ. The segment at 74–499 is interaction with keratin proteins; that stretch reads REEKQRKLEE…IHSRPRSAWT (426 aa). The tract at residues 260 to 426 is trichohyalin/plectin homology domain; it reads KMMEESRRKT…RLTLRLEKEQ (167 aa).

This sequence belongs to the TCHP family.

It localises to the cytoplasm. The protein localises to the cytoskeleton. It is found in the microtubule organizing center. The protein resides in the centrosome. Its function is as follows. May act as a 'capping' or 'branching' protein for keratin filaments in the cell periphery. May regulate K8/K18 filament and desmosome organization mainly at the apical or peripheral regions of simple epithelial cells. This Danio rerio (Zebrafish) protein is Trichoplein keratin filament-binding protein.